The sequence spans 237 residues: MSTLHDLNGATIAFDLDGTLVDTAPDLVGALNIILAQESLPPLPFDDVRLMVGRGARALLERGFAAAGAPLDAEQAPALVQRFIDVYLARIADESAPFPGVVEVLSDLKTAGAKLVVCTNKLTNLSTALLDAVALSPFFEAVIGADLAPAAKPDGRHVAAAVAAVGGDVSRAVMIGDSVNDALGARNAGVPGVLVSFGYTEEPVETLGADLVIHSFLDVPKACITLLTSCPAPNTGL.

Aspartate 15 acts as the Nucleophile in catalysis. 3 residues coordinate Mg(2+): aspartate 15, aspartate 17, and aspartate 177.

This sequence belongs to the HAD-like hydrolase superfamily. CbbY/CbbZ/Gph/YieH family. Requires Mg(2+) as cofactor.

It catalyses the reaction 2-phosphoglycolate + H2O = glycolate + phosphate. It participates in organic acid metabolism; glycolate biosynthesis; glycolate from 2-phosphoglycolate: step 1/1. In terms of biological role, specifically catalyzes the dephosphorylation of 2-phosphoglycolate. Is involved in the dissimilation of the intracellular 2-phosphoglycolate formed during the DNA repair of 3'-phosphoglycolate ends, a major class of DNA lesions induced by oxidative stress. In Caulobacter vibrioides (strain ATCC 19089 / CIP 103742 / CB 15) (Caulobacter crescentus), this protein is Phosphoglycolate phosphatase.